The sequence spans 127 residues: UPF0325 protein VV1_1856 (127 aa).

It belongs to the UPF0325 family.

The protein is UPF0325 protein VV1_1856 of Vibrio vulnificus (strain CMCP6).